Here is a 149-residue protein sequence, read N- to C-terminus: Calmodulin (149 aa).

Residue Ala-2 is modified to N-acetylalanine. EF-hand domains are found at residues 8–43 (EQIA…LGQN), 44–79 (PTEA…KMKD), 81–116 (DSEE…LGEK), and 117–149 (LTDE…MTAK). The Ca(2+) site is built by Asp-21, Asp-23, Asp-25, Thr-27, Glu-32, Asp-57, Asp-59, Asn-61, Thr-63, Glu-68, Asp-94, Asp-96, Asn-98, Tyr-100, and Glu-105. Lys-116 is subject to N6,N6,N6-trimethyllysine. Asp-130, Asp-132, Asp-134, Gln-136, and Glu-141 together coordinate Ca(2+).

It belongs to the calmodulin family.

Calmodulin acts as part of a calcium signal transduction pathway by mediating the control of a large number of enzymes, ion channels, aquaporins and other proteins through calcium-binding. Calcium-binding is required for the activation of calmodulin. Among the enzymes to be stimulated by the calmodulin-calcium complex are a number of protein kinases, such as myosin light-chain kinases and calmodulin-dependent protein kinase type II (CaMK2), and phosphatases. In Oreochromis mossambicus (Mozambique tilapia), this protein is Calmodulin (calm).